The primary structure comprises 331 residues: Flotillin-like protein FloA (331 aa).

2 helical membrane-spanning segments follow: residues 6–26 (LMIL…FTFV) and 28–48 (VMLW…TLVG). The tract at residues 236 to 331 (QTDQAEADKN…KDPSDEDRKS (96 aa)) is required for correct localization. 4 short sequence motifs (EA repeat) span residues 240–242 (AEA), 251–253 (AEE), 278–282 (EAEAE), and 288–290 (AEA). A disordered region spans residues 312–331 (EMRDSFGKLTKDPSDEDRKS).

The protein belongs to the flotillin-like FloA family. Homooligomerizes. Interacts with FloT. Interacts with FtsH midcell. Interacts with PhoR, colocalizes with PhoR in FloA-only membrane rafts.

Its subcellular location is the cell membrane. It localises to the membrane raft. Found in functional membrane microdomains (FMM) that may be equivalent to eukaryotic membrane rafts. FMMs are highly dynamic and increase in number as cells age. FloA and FloT function is partially redundant; double deletions have marked synthetic phenotypes. Flotillins are thought to be important factors in membrane fluidity, especially during periods of rapid growth in rich media. Whether specific proteins are associated with FMMs is controversial; in one study FloT rafts have been shown to include proteins involved in adaptation to stationary phase, while FloA-FloT rafts include proteins involved in differentiation including sporulation, biofilm formation and DNA uptake competence. Another (more finely resolved) study only showed association of NfeD2 with FloT rafts of all the proteins examined. Involved in spatial organization of membranes, perhaps recruiting proteins to specific membrane regions. Simultaneous overexpression of both FloA and FloT leads to defects in cell division and differentiation, in part caused by stabilization of FtsH and its subsequent increased ability to degrade proteins. Cells make more biofilm, are about half as long, have less EzrA and more frequent Z-rings. This Bacillus subtilis (strain 168) protein is Flotillin-like protein FloA.